A 215-amino-acid polypeptide reads, in one-letter code: Small ribosomal subunit protein uS7 (215 aa).

It belongs to the universal ribosomal protein uS7 family. As to quaternary structure, part of the 30S ribosomal subunit.

One of the primary rRNA binding proteins, it binds directly to 16S rRNA where it nucleates assembly of the head domain of the 30S subunit. Is located at the subunit interface close to the decoding center. The polypeptide is Small ribosomal subunit protein uS7 (Thermococcus kodakarensis (strain ATCC BAA-918 / JCM 12380 / KOD1) (Pyrococcus kodakaraensis (strain KOD1))).